An 83-amino-acid chain; its full sequence is uncharacterized protein (83 aa).

This is an uncharacterized protein from Escherichia phage Bf23 (Enterobacteria phage BF23).